A 195-amino-acid chain; its full sequence is Protein Nef (195 aa).

Residue G2 is the site of N-myristoyl glycine; by host attachment. Positions 2–53 (GNIFGRWPGARKAIEDLHNTSSEPVGQASQDLQNKGGLTTNTLGTSADVLEY) are N-terminal; associates with the host plasma membrane. The necessary for MHC-I internalization stretch occupies residues 7–22 (RWPGARKAIEDLHNTS). An acidic region spans residues 59–61 (EEE). An SH3-binding region spans residues 65-74 (PVRPAVPMRP). The SH3-binding; interaction with Src family tyrosine kinases stretch occupies residues 65–74 (PVRPAVPMRP). Positions 68–71 (PAVP) match the PxxP motif. A mediates dimerization region spans residues 104–120 (AILDTWMYNTQGVFPDW). A binding to ATP6V1H region spans residues 144–171 (VDPPEDDEKNILLHPACSHGTTDPDGET). Positions 155-156 (LL) match the Di-leucine internalization motif; necessary for CD4 internalization motif.

Belongs to the lentivirus primate group Nef protein family. As to quaternary structure, homodimer.

Its subcellular location is the host cell membrane. It localises to the host cytoplasm. It is found in the host perinuclear region. The protein resides in the virion. The protein localises to the secreted. In terms of biological role, factor of infectivity and pathogenicity, required for optimal virus replication. Alters numerous pathways of T-lymphocyte function and down-regulates immunity surface molecules in order to evade host defense and increase viral infectivity. Alters the functionality of other immunity cells, like dendritic cells, monocytes/macrophages and NK cells. One of the earliest and most abundantly expressed viral proteins. Its function is as follows. In infected CD4(+) T-lymphocytes, down-regulates the surface MHC-I, mature MHC-II, CD4, CD28 and probably other immunity surface molecules. In consequence infected cells are masked for immune recognition by cytotoxic T-lymphocytes. Decreasing the number of immune receptors also prevents reinfection by more HIV particles (superinfection). Functionally, bypasses host T-cell signaling by inducing a transcriptional program nearly identical to that of anti-CD3 cell activation. Interaction with TCR-zeta chain up-regulates the Fas ligand (FasL). Increasing surface FasL molecules and decreasing surface MHC-I molecules on infected CD4(+) cells send attacking cytotoxic CD8+ T-lymphocytes into apoptosis. Plays a role in optimizing the host cell environment for viral replication without causing cell death by apoptosis. Protects the infected cells from apoptosis in order to keep them alive until the next virus generation is ready to strike. The polypeptide is Protein Nef (Pan troglodytes (Chimpanzee)).